The following is a 576-amino-acid chain: Lysine--tRNA ligase (576 aa).

Residues Glu412 and Glu419 each coordinate Mg(2+).

Belongs to the class-II aminoacyl-tRNA synthetase family. As to quaternary structure, homodimer. Requires Mg(2+) as cofactor.

It is found in the cytoplasm. It carries out the reaction tRNA(Lys) + L-lysine + ATP = L-lysyl-tRNA(Lys) + AMP + diphosphate. The sequence is that of Lysine--tRNA ligase from Parabacteroides distasonis (strain ATCC 8503 / DSM 20701 / CIP 104284 / JCM 5825 / NCTC 11152).